Here is a 1502-residue protein sequence, read N- to C-terminus: Rho GTPase-activating protein 5 (1502 aa).

4 FF domains span residues Q267–Q325, K366–H420, R427–E481, and I482–F548. Y550 carries the post-translational modification 3'-nitrotyrosine. Phosphoserine is present on residues S590 and S765. One can recognise a pG1 pseudoGTPase domain in the interval S590–V763. The 166-residue stretch at R779–M944 folds into the pG2 pseudoGTPase domain. Phosphoserine occurs at positions 951 and 968. 3 disordered regions span residues Y975–P1004, H1022–N1050, and N1069–D1089. Over residues V1036–V1045 the composition is skewed to pro residues. S1115 carries the phosphoserine modification. 2 disordered regions span residues F1125–K1156 and Y1168–N1254. Basic and acidic residues predominate over residues R1140–P1150. A phosphoserine mark is found at S1173, S1176, S1195, S1202, and S1218. The Rho-GAP domain occupies M1262–F1449.

May interact with RASA1/p120GAP. Detected in skin fibroblasts (at protein level).

The protein resides in the cytoplasm. The protein localises to the cell membrane. In terms of biological role, GTPase-activating protein for Rho family members. This Homo sapiens (Human) protein is Rho GTPase-activating protein 5 (ARHGAP5).